The chain runs to 377 residues: Chaperone protein DnaJ (377 aa).

The region spanning aspartate 5–glycine 70 is the J domain. The CR-type zinc finger occupies glycine 133–threonine 211. Positions 146, 149, 163, 166, 185, 188, 199, and 202 each coordinate Zn(2+). CXXCXGXG motif repeat units follow at residues cysteine 146 to glycine 153, cysteine 163 to glycine 170, cysteine 185 to glycine 192, and cysteine 199 to glycine 206.

The protein belongs to the DnaJ family. As to quaternary structure, homodimer. Zn(2+) is required as a cofactor.

It localises to the cytoplasm. Participates actively in the response to hyperosmotic and heat shock by preventing the aggregation of stress-denatured proteins and by disaggregating proteins, also in an autonomous, DnaK-independent fashion. Unfolded proteins bind initially to DnaJ; upon interaction with the DnaJ-bound protein, DnaK hydrolyzes its bound ATP, resulting in the formation of a stable complex. GrpE releases ADP from DnaK; ATP binding to DnaK triggers the release of the substrate protein, thus completing the reaction cycle. Several rounds of ATP-dependent interactions between DnaJ, DnaK and GrpE are required for fully efficient folding. Also involved, together with DnaK and GrpE, in the DNA replication of plasmids through activation of initiation proteins. This Shewanella sp. (strain MR-4) protein is Chaperone protein DnaJ.